The primary structure comprises 196 residues: Anthranilate synthase component 2 (196 aa).

A Glutamine amidotransferase type-1 domain is found at 3-196; sequence NIVFIDNFDS…IEWALEKNNA (194 aa). Residue 57–59 coordinates L-glutamine; that stretch reads GPG. Cys-84 (nucleophile; for GATase activity) is an active-site residue. L-glutamine-binding positions include Gln-88 and 134–135; that span reads SL. Active-site for GATase activity residues include His-170 and Glu-172.

In terms of assembly, heterotetramer consisting of two non-identical subunits: a beta subunit (TrpG) and a large alpha subunit (TrpE).

The catalysed reaction is chorismate + L-glutamine = anthranilate + pyruvate + L-glutamate + H(+). It functions in the pathway amino-acid biosynthesis; L-tryptophan biosynthesis; L-tryptophan from chorismate: step 1/5. Its function is as follows. Part of a heterotetrameric complex that catalyzes the two-step biosynthesis of anthranilate, an intermediate in the biosynthesis of L-tryptophan. In the first step, the glutamine-binding beta subunit (TrpG) of anthranilate synthase (AS) provides the glutamine amidotransferase activity which generates ammonia as a substrate that, along with chorismate, is used in the second step, catalyzed by the large alpha subunit of AS (TrpE) to produce anthranilate. In the absence of TrpG, TrpE can synthesize anthranilate directly from chorismate and high concentrations of ammonia. This is Anthranilate synthase component 2 (trpG) from Vibrio parahaemolyticus serotype O3:K6 (strain RIMD 2210633).